The chain runs to 168 residues: Short form salivary protein D7R2 (168 aa).

Positions methionine 1 to alanine 21 are cleaved as a signal peptide. Disulfide bonds link cysteine 30–cysteine 62, cysteine 43–cysteine 168, and cysteine 101–cysteine 120. 2 residues coordinate noradrenaline: glutamate 31 and arginine 46. Residue glutamate 31 coordinates serotonin. Histidine 59, tyrosine 118, aspartate 135, and glutamate 138 together coordinate serotonin. Histamine-binding residues include tyrosine 118, aspartate 135, and glutamate 138. Noradrenaline contacts are provided by aspartate 135 and glutamate 138.

It belongs to the PBP/GOBP family. As to expression, female saliva (at protein level). Female salivary gland. Not detected in female carcass without salivary glands. Not detected in male tissues.

The protein resides in the secreted. Its function is as follows. Modulates blood feeding of female mosquitoes on vertebrate species by binding and sequestering different mediators involved in the host response. Binds serotonin, noradrenaline, histamine and adrenaline. Inhibits histamine-, serotonin- and noradrenaline-induced smooth muscle contraction. Exhibits vasodilating activity. In Anopheles gambiae (African malaria mosquito), this protein is Short form salivary protein D7R2.